A 460-amino-acid chain; its full sequence is Elongation factor 1-alpha (460 aa).

Residue Gly-2 is modified to N,N,N-trimethylglycine. At Lys-3 the chain carries N6,N6-dimethyllysine; alternate. N6-methyllysine; alternate is present on Lys-3. The 236-residue stretch at 6-241 folds into the tr-type G domain; sequence KTHINVVVIG…DAIEPPKRPT (236 aa). Residues 15–22 form a G1 region; sequence GHVDSGKS. GTP is bound at residue 15-22; the sequence is GHVDSGKS. At Lys-31 the chain carries N6-methyllysine. A G2 region spans residues 71–75; the sequence is GITID. Lys-80 carries the post-translational modification N6,N6,N6-trimethyllysine. The tract at residues 92 to 95 is G3; it reads DAPG. GTP is bound by residues 92 to 96 and 154 to 157; these read DAPGH and NKMD. The interval 154–157 is G4; that stretch reads NKMD. The tract at residues 193-195 is G5; it reads SGF. The residue at position 317 (Lys-317) is an N6,N6-dimethyllysine; alternate. Lys-317 is subject to N6-methyllysine; alternate. N6-methyllysine is present on Lys-391.

The protein belongs to the TRAFAC class translation factor GTPase superfamily. Classic translation factor GTPase family. EF-Tu/EF-1A subfamily.

It localises to the cytoplasm. Functionally, this protein promotes the GTP-dependent binding of aminoacyl-tRNA to the A-site of ribosomes during protein biosynthesis. The sequence is that of Elongation factor 1-alpha (tef-1) from Neurospora crassa (strain ATCC 24698 / 74-OR23-1A / CBS 708.71 / DSM 1257 / FGSC 987).